Here is a 169-residue protein sequence, read N- to C-terminus: Small ribosomal subunit protein bS18c (169 aa).

The interval 1 to 61 (MYTSKQPFLK…RRPRIGPGDR (61 aa)) is disordered. Positions 27 to 55 (QTFRKSKQTFRKFKQPFRKSKQPFRRRPR) are enriched in basic residues.

This sequence belongs to the bacterial ribosomal protein bS18 family. As to quaternary structure, part of the 30S ribosomal subunit.

It is found in the plastid. Its subcellular location is the chloroplast. This chain is Small ribosomal subunit protein bS18c, found in Agrostis stolonifera (Creeping bentgrass).